The sequence spans 434 residues: Cysteine--tRNA ligase (434 aa).

Residue C28 participates in Zn(2+) binding. Residues 30 to 40 (PTVYDDIHIGN) carry the 'HIGH' region motif. C207, H232, and E236 together coordinate Zn(2+). A 'KMSKS' region motif is present at residues 264–268 (KMSKS). An ATP-binding site is contributed by K267.

Belongs to the class-I aminoacyl-tRNA synthetase family. Monomer. Zn(2+) serves as cofactor.

It localises to the cytoplasm. It carries out the reaction tRNA(Cys) + L-cysteine + ATP = L-cysteinyl-tRNA(Cys) + AMP + diphosphate. This is Cysteine--tRNA ligase from Acholeplasma laidlawii (strain PG-8A).